A 206-amino-acid polypeptide reads, in one-letter code: uncharacterized protein (206 aa).

The helical transmembrane segment at 166–186 (FYTGLSVIVGGATALALGLFF) threads the bilayer.

The protein resides in the membrane. This is an uncharacterized protein from Dictyostelium discoideum (Social amoeba).